The sequence spans 263 residues: Acidic leucine-rich nuclear phosphoprotein 32 family member A (263 aa).

4 LRR repeats span residues 16 to 37 (QIQE…TDEY), 39 to 60 (ALES…PKLP), 61 to 83 (NLKK…TTSP), and 84 to 105 (KLQY…KPLE). The 39-residue stretch at 118-156 (NDATQVDNYREKIFKMLPSLNFLDGFDCNDEEAQSEGDD) folds into the LRRCT domain. 2 stretches are compositionally biased toward acidic residues: residues 144–189 (DCND…DGDN) and 198–232 (YNDD…DGEA). Positions 144-263 (DCNDEEAQSE…ARGKKRKHDG (120 aa)) are disordered. Residues 242 to 254 (SKKEPEKTDESQA) show a composition bias toward basic and acidic residues.

It belongs to the ANP32 family. Post-translationally, phosphorylated on serine residues.

It is found in the nucleus. Its subcellular location is the cytoplasm. In terms of biological role, implicated in a number of cellular processes, including proliferation, differentiation, caspase-dependent and caspase-independent apoptosis, suppression of transformation (tumor suppressor), inhibition of protein phosphatase 2A, regulation of mRNA trafficking and stability, and inhibition of acetyltransferases as part of the INHAT (inhibitor of histone acetyltransferases) complex. In Drosophila pseudoobscura pseudoobscura (Fruit fly), this protein is Acidic leucine-rich nuclear phosphoprotein 32 family member A (Anp32a).